A 311-amino-acid chain; its full sequence is Bifunctional protein FolD (311 aa).

174 to 176 (GKG) provides a ligand contact to NADP(+).

This sequence belongs to the tetrahydrofolate dehydrogenase/cyclohydrolase family. Homodimer.

It catalyses the reaction (6R)-5,10-methylene-5,6,7,8-tetrahydrofolate + NADP(+) = (6R)-5,10-methenyltetrahydrofolate + NADPH. The catalysed reaction is (6R)-5,10-methenyltetrahydrofolate + H2O = (6R)-10-formyltetrahydrofolate + H(+). It participates in one-carbon metabolism; tetrahydrofolate interconversion. In terms of biological role, catalyzes the oxidation of 5,10-methylenetetrahydrofolate to 5,10-methenyltetrahydrofolate and then the hydrolysis of 5,10-methenyltetrahydrofolate to 10-formyltetrahydrofolate. The polypeptide is Bifunctional protein FolD (Pyrobaculum islandicum (strain DSM 4184 / JCM 9189 / GEO3)).